The primary structure comprises 399 residues: Bombesin receptor subtype-3 (399 aa).

Topologically, residues 1–41 (MSQRQSQSPNQTLISITNDTETSSSVVSNDTTHKGWTGDNS) are extracellular. N-linked (GlcNAc...) asparagine glycosylation is found at Asn10, Asn18, and Asn29. Residues 42 to 63 (PGIEALCAIYITYAGIISVGIL) traverse the membrane as a helical segment. Residues 64-82 (GNAILIKVFFKTKSMQTVP) are Cytoplasmic-facing. Residues 83–103 (NIFITSLAFGDLLLLLTCVPV) traverse the membrane as a helical segment. Residues 104 to 121 (DATHYLAEGWLFGKVGCK) lie on the Extracellular side of the membrane. Cys120 and Cys203 are disulfide-bonded. The chain crosses the membrane as a helical span at residues 122–143 (VLSFIRLTSVGVSVFTLTILSA). Over 144–163 (DRYKAVVKPLERQPPNAILK) the chain is Cytoplasmic. The helical transmembrane segment at 164-184 (TCAKAGGIWIVSMIFALPEAI) threads the bilayer. Residues 185-220 (FSNVYTFQDPNRNVTFESCNSYPISERLLQEIHSLL) are Extracellular-facing. Residues 221-241 (CFLVFYIIPLSIISVYYSLIA) form a helical membrane-spanning segment. Over 242-272 (RTLYKSTLNIPTEEQSHARKQIESRKRIAKT) the chain is Cytoplasmic. A helical membrane pass occupies residues 273 to 293 (VLVLVALFALCWLPNHLLYLY). Over 294 to 313 (HSFTYESYANHSDVPFVIII) the chain is Extracellular. The chain crosses the membrane as a helical span at residues 314-333 (FSRVLAFSNSCVNPFALYWL). Residues 334–399 (SKTFQQHFKA…SSAKKGEDKV (66 aa)) lie on the Cytoplasmic side of the membrane. Residue Cys347 is the site of S-palmitoyl cysteine attachment.

This sequence belongs to the G-protein coupled receptor 1 family. As to quaternary structure, interacts with C6orf89.

Its subcellular location is the cell membrane. Functionally, role in sperm cell division, maturation, or function. This receptor mediates its action by association with G proteins that activate a phosphatidylinositol-calcium second messenger system. The sequence is that of Bombesin receptor subtype-3 (Brs3) from Mus musculus (Mouse).